The chain runs to 140 residues: Sec-independent protein translocase protein TatB (140 aa).

Residues 1-21 traverse the membrane as a helical segment; sequence MFDIGFSELLLIAVVALVVLG. The tract at residues 119 to 140 is disordered; that stretch reads VHVTSPPPSTSTHGNNGQEKSQ. The span at 128 to 140 shows a compositional bias: polar residues; it reads TSTHGNNGQEKSQ.

Belongs to the TatB family. As to quaternary structure, the Tat system comprises two distinct complexes: a TatABC complex, containing multiple copies of TatA, TatB and TatC subunits, and a separate TatA complex, containing only TatA subunits. Substrates initially bind to the TatABC complex, which probably triggers association of the separate TatA complex to form the active translocon.

The protein resides in the cell inner membrane. Functionally, part of the twin-arginine translocation (Tat) system that transports large folded proteins containing a characteristic twin-arginine motif in their signal peptide across membranes. Together with TatC, TatB is part of a receptor directly interacting with Tat signal peptides. TatB may form an oligomeric binding site that transiently accommodates folded Tat precursor proteins before their translocation. In Xylella fastidiosa (strain 9a5c), this protein is Sec-independent protein translocase protein TatB.